The chain runs to 527 residues: Cytochrome P450 monooxygenase olcJ (527 aa).

The chain crosses the membrane as a helical span at residues 21–43; the sequence is GLLTRYNVFMAISITVTALYLIH. Cysteine 464 contacts heme.

It belongs to the cytochrome P450 family. The cofactor is heme.

The protein resides in the membrane. The protein operates within secondary metabolite biosynthesis; terpenoid biosynthesis. Cytochrome P450 monooxygenase; part of the gene cluster that mediates the biosynthesis of 15-deoxyoxalicine B. The first step of the pathway is the synthesis of nicotinyl-CoA from nicotinic acid by the nicotinic acid-CoA ligase olcI. Nicotinyl-CoA is then a substrate of polyketide synthase olcA to produce 4-hydroxy-6-(3-pyridinyl)-2H-pyran-2-one (HPPO) which is further prenylated by the polyprenyl transferase olcH to yield geranylgeranyl-HPPO. Geranylgeranyl pyrophosphate is provided by the cluster-specific geranylgeranyl pyrophosphate synthase olcC. The FAD-dependent monooxygenase olcE catalyzes the epoxidation of geranylgeranyl-HPPO and the terpene cyclase olcD catalyzes the cyclization of the terpenoid component, resulting in the formation of the tricyclic terpene moiety seen in predecaturin E. The cytochrome P450 monooxygenase then catalyzes the allylic oxidation of predecaturin E, which is followed by spirocylization with concomitant loss of one molecule of water to form decaturin E. Decaturin E is the substrate of the cytochrome P450 monooxygenase olcJ which hydroxylates it at the C-29 position to form decaturin F. The short-chain dehydrogenase/reductase olcF may catalyze the oxidation of decaturin F to generate the 29-hydroxyl-27-one intermediate, and subsequent hemiacetal formation probably leads to the formation of decaturin C. The dioxygenase olcK may be a peroxisomal enzyme that catalyzes the hydroxylation of decaturin C into decaturin A once decaturin C is shuttled into the peroxisome by the MFS transporter olcL. Finally the cytochrome P450 monooxygenase olcB catalyzes the oxidative rearrangement to yield 15-deoxyoxalicine B. In the absence of olcJ, decaturin E may be shunted to a pathway in which it is oxidized to a ketone, possibly by olcF, to form decaturin D, which undergoes further allylic oxidation to yield decaturin G. Moreover, in the absence of oclK or oclL, oclB can convert decaturin C into 15-deoxyoxalicine A. In Penicillium canescens, this protein is Cytochrome P450 monooxygenase olcJ.